The chain runs to 598 residues: Elongation factor 4 (598 aa).

Residues 5–187 (SHIRNFSIIA…RLVATIPAPT (183 aa)) form the tr-type G domain. GTP-binding positions include 17-22 (DHGKST) and 134-137 (NKMD).

The protein belongs to the TRAFAC class translation factor GTPase superfamily. Classic translation factor GTPase family. LepA subfamily.

It localises to the cell inner membrane. The catalysed reaction is GTP + H2O = GDP + phosphate + H(+). Its function is as follows. Required for accurate and efficient protein synthesis under certain stress conditions. May act as a fidelity factor of the translation reaction, by catalyzing a one-codon backward translocation of tRNAs on improperly translocated ribosomes. Back-translocation proceeds from a post-translocation (POST) complex to a pre-translocation (PRE) complex, thus giving elongation factor G a second chance to translocate the tRNAs correctly. Binds to ribosomes in a GTP-dependent manner. This is Elongation factor 4 from Pseudomonas syringae pv. syringae (strain B728a).